Reading from the N-terminus, the 185-residue chain is MISVNDFRTGLTIEVDGGIWRVVDFQHVKPGKGAAFVRSKLRNLRTGAIQEKTFRAGEKVAKAQIETKTMQYLYANGDQHVFMDTSSYEQLELSETQIKDELKYLLENMSVQIVMYGAETLGVELPNTVELEVVETEPGIKGDTTSGGSKPAKTETGLIVNVPFFVNQGDKLVINTSDGSYVSRA.

It belongs to the elongation factor P family.

The protein resides in the cytoplasm. The protein operates within protein biosynthesis; polypeptide chain elongation. Involved in peptide bond synthesis. Stimulates efficient translation and peptide-bond synthesis on native or reconstituted 70S ribosomes in vitro. Probably functions indirectly by altering the affinity of the ribosome for aminoacyl-tRNA, thus increasing their reactivity as acceptors for peptidyl transferase. This is Elongation factor P from Bacillus pumilus (strain SAFR-032).